Consider the following 640-residue polypeptide: Autophagy-related protein 20 (640 aa).

2 stretches are compositionally biased toward polar residues: residues 1–18 and 126–153; these read MSDL…SETR and AETC…PSVS. Disordered stretches follow at residues 1–63 and 126–156; these read MSDL…NNKV and AETC…SNRK. Ser-2 is modified (N-acetylserine). One can recognise a PX domain in the interval 140 to 301; it reads MNGETSASEE…DFLDPNNHNW (162 aa). Positions 192, 194, 218, and 267 each coordinate a 1,2-diacyl-sn-glycero-3-phospho-(1D-myo-inositol-3-phosphate). Residues Ser-361 and Ser-363 each carry the phosphoserine modification. Coiled coils occupy residues 475 to 512 and 562 to 593; these read LQNE…DNEM and TASI…KVIK.

Belongs to the sorting nexin family. As to quaternary structure, forms a complex with SNX4 and ATG17.

Its subcellular location is the endosome membrane. The protein resides in the preautophagosomal structure membrane. Required for cytoplasm to vacuole transport (Cvt), pexophagy and mitophagy. Also involved in endoplasmic reticulum-specific autophagic process and is essential for the survival of cells subjected to severe ER stress. Functions in protein retrieval from the endocytic pathway. Required for proper sorting of the v-SNARE protein SNC1. This chain is Autophagy-related protein 20 (ATG20), found in Saccharomyces cerevisiae (strain ATCC 204508 / S288c) (Baker's yeast).